The chain runs to 513 residues: L-aspartate oxidase (513 aa).

Residues 17 to 20 (AGIA) and 46 to 53 (SSILAQGG) contribute to the FAD site. Arg-278 serves as the catalytic Proton donor/acceptor. FAD is bound by residues Glu-361 and 377–378 (SL).

This sequence belongs to the FAD-dependent oxidoreductase 2 family. NadB subfamily. The cofactor is FAD.

The protein localises to the cytoplasm. The enzyme catalyses L-aspartate + O2 = iminosuccinate + H2O2. The protein operates within cofactor biosynthesis; NAD(+) biosynthesis; iminoaspartate from L-aspartate (oxidase route): step 1/1. In terms of biological role, catalyzes the oxidation of L-aspartate to iminoaspartate, the first step in the de novo biosynthesis of NAD(+). This chain is L-aspartate oxidase (nadB), found in Mesorhizobium japonicum (strain LMG 29417 / CECT 9101 / MAFF 303099) (Mesorhizobium loti (strain MAFF 303099)).